We begin with the raw amino-acid sequence, 242 residues long: Ribosomal RNA small subunit methyltransferase G (242 aa).

Residues Gly81, Phe86, 104–106, 132–133, and Arg151 each bind S-adenosyl-L-methionine; these read DST and AE.

The protein belongs to the methyltransferase superfamily. RNA methyltransferase RsmG family.

The protein resides in the cytoplasm. Functionally, specifically methylates the N7 position of a guanine in 16S rRNA. This chain is Ribosomal RNA small subunit methyltransferase G, found in Synechococcus elongatus (strain ATCC 33912 / PCC 7942 / FACHB-805) (Anacystis nidulans R2).